Reading from the N-terminus, the 743-residue chain is Coiled-coil domain-containing protein 30 (743 aa).

2 stretches are compositionally biased toward basic and acidic residues: residues 1–22 (MSQE…REKQ) and 133–193 (SPKE…MKPE). Disordered regions lie at residues 1-25 (MSQE…QLAS), 114-193 (ENIC…MKPE), 208-233 (SLLQ…GDKL), and 695-715 (SKEA…LVCS). 2 coiled-coil regions span residues 21 to 98 (KQLA…QLNH) and 165 to 580 (REGQ…LIHS). Over residues 208-223 (SLLQSQSSGDSSDDSG) the composition is skewed to low complexity.

It belongs to the prefoldin subunit beta family.

The polypeptide is Coiled-coil domain-containing protein 30 (CCDC30) (Macaca fascicularis (Crab-eating macaque)).